A 421-amino-acid polypeptide reads, in one-letter code: Serine--tRNA ligase (421 aa).

229–231 (TSE) is a binding site for L-serine. 260–262 (RRE) is a binding site for ATP. E283 lines the L-serine pocket. 347–350 (EISS) lines the ATP pocket. S381 contacts L-serine.

Belongs to the class-II aminoacyl-tRNA synthetase family. Type-1 seryl-tRNA synthetase subfamily. Homodimer. The tRNA molecule binds across the dimer.

It is found in the cytoplasm. The enzyme catalyses tRNA(Ser) + L-serine + ATP = L-seryl-tRNA(Ser) + AMP + diphosphate + H(+). It catalyses the reaction tRNA(Sec) + L-serine + ATP = L-seryl-tRNA(Sec) + AMP + diphosphate + H(+). It functions in the pathway aminoacyl-tRNA biosynthesis; selenocysteinyl-tRNA(Sec) biosynthesis; L-seryl-tRNA(Sec) from L-serine and tRNA(Sec): step 1/1. Its function is as follows. Catalyzes the attachment of serine to tRNA(Ser). Is also able to aminoacylate tRNA(Sec) with serine, to form the misacylated tRNA L-seryl-tRNA(Sec), which will be further converted into selenocysteinyl-tRNA(Sec). In Fusobacterium nucleatum subsp. nucleatum (strain ATCC 25586 / DSM 15643 / BCRC 10681 / CIP 101130 / JCM 8532 / KCTC 2640 / LMG 13131 / VPI 4355), this protein is Serine--tRNA ligase.